The chain runs to 238 residues: MDFVVLWVDGNDPEFIREKNKYTPHNRKIDNDEDNVHRYRDYGTFNYWFRMVERHAPWVNNIYLITNGQRPKWLNVNHPKLKWVRHEEFIPKEYLPIFNASAIEMNIHRIDGLSENFVLFNDDMYLIQDVKYSDFFVNEKPKLLAIYEALVPWSRFSKIYFNDVLVLYRHFPNKKALRQSPFKFFNIKYGQLMLKNRLHNFHGGFTHYRNYRAKIGRHIWFFEGNFLFTSGTKCFQFI.

It belongs to the stealth family.

This is Capsular polysaccharide phosphotransferase eps5J (eps5J) from Streptococcus thermophilus.